A 469-amino-acid polypeptide reads, in one-letter code: 3-isopropylmalate dehydratase large subunit (469 aa).

[4Fe-4S] cluster contacts are provided by Cys347, Cys410, and Cys413.

It belongs to the aconitase/IPM isomerase family. LeuC type 1 subfamily. In terms of assembly, heterodimer of LeuC and LeuD. Requires [4Fe-4S] cluster as cofactor.

The catalysed reaction is (2R,3S)-3-isopropylmalate = (2S)-2-isopropylmalate. Its pathway is amino-acid biosynthesis; L-leucine biosynthesis; L-leucine from 3-methyl-2-oxobutanoate: step 2/4. Catalyzes the isomerization between 2-isopropylmalate and 3-isopropylmalate, via the formation of 2-isopropylmaleate. The polypeptide is 3-isopropylmalate dehydratase large subunit (Burkholderia pseudomallei (strain 1106a)).